Consider the following 483-residue polypeptide: MKTLNRRDFPGAQYPDRIIQFGEGNFLRAFVDWQIDLLNEHTDLNAGIVVVRPIATDFPPSLSTQDGLYTTIIRGLNEQGEAVSDARLIRSVNREISAYADFDAFLRLAHNPEMRFVFSNTTEAGISYHAGDRFDDAPPVSYPAKLTRLLFERYQHFAGAADKGWVIIPCELIDYNGEALQALVLRYAAEWQLPQAFIRWLTSANTFCSTLVDRIVTGYPRDEVAALEAQTGYKDAFLDTAEHFYLFVIQGPASLAAELRLDKLPLNVRIVDDIKPYKERKVAILNGAHTALVPVAFLAGIDTVGEAMNDAEICAFVEKAIYDEIIPVLDLPRDELESFASAVTGRFRNPYIKHQLLSIALNGMTKYRTRILPQLLAGQQKSGQLPPRLTFALAALIAFYRGEREGERYPVQDDAEWLARYQTLWARHRDRQMSTRELVTAVLSVEAHWEQDLSQIPGLVEQVTADLDAILSRGMRDAVQPLC.

18–29 (IIQFGEGNFLRA) is an NAD(+) binding site.

The protein belongs to the mannitol dehydrogenase family. UxaB subfamily.

It catalyses the reaction D-altronate + NAD(+) = keto-D-tagaturonate + NADH + H(+). It functions in the pathway carbohydrate metabolism; pentose and glucuronate interconversion. In Klebsiella pneumoniae (strain 342), this protein is Altronate oxidoreductase.